A 430-amino-acid polypeptide reads, in one-letter code: Adenylosuccinate synthetase (430 aa).

Residues 12-18 and 40-42 each bind GTP; these read GDEGKGK and GHT. Aspartate 13 functions as the Proton acceptor in the catalytic mechanism. Mg(2+) is bound by residues aspartate 13 and glycine 40. IMP contacts are provided by residues 13–16, 38–41, threonine 130, arginine 144, glutamine 224, threonine 239, and arginine 303; these read DEGK and NAGH. Histidine 41 (proton donor) is an active-site residue. Residue 299–305 coordinates substrate; the sequence is TVTGRKR. GTP is bound by residues arginine 305, 331-333, and 413-415; these read KLD and STS.

This sequence belongs to the adenylosuccinate synthetase family. In terms of assembly, homodimer. It depends on Mg(2+) as a cofactor.

The protein resides in the cytoplasm. The catalysed reaction is IMP + L-aspartate + GTP = N(6)-(1,2-dicarboxyethyl)-AMP + GDP + phosphate + 2 H(+). Its pathway is purine metabolism; AMP biosynthesis via de novo pathway; AMP from IMP: step 1/2. Functionally, plays an important role in the de novo pathway of purine nucleotide biosynthesis. Catalyzes the first committed step in the biosynthesis of AMP from IMP. The chain is Adenylosuccinate synthetase from Cereibacter sphaeroides (strain ATCC 17029 / ATH 2.4.9) (Rhodobacter sphaeroides).